Consider the following 151-residue polypeptide: Large ribosomal subunit protein bL9 (151 aa).

This sequence belongs to the bacterial ribosomal protein bL9 family.

Binds to the 23S rRNA. The sequence is that of Large ribosomal subunit protein bL9 from Thermosipho melanesiensis (strain DSM 12029 / CIP 104789 / BI429).